A 218-amino-acid polypeptide reads, in one-letter code: MMQTGLDFTLVEDLVAGVDEVGRGPLCGAVVTAAVILDPTRPILGLNDSKKLTEARREKLYVEIQEKALCWFIARAEVEEIDQLNILHATMLAMQRAVEGLSITPRLALIDGNRCPQLSVPSAPVVKGDSKVPAIAAASILAKVSRDREMAAFELIYPGYGIGGHKGYPTPVHLEALARLGPTPIHRRSFAPVRAAHEARATIMMGGSISPSVGLLQD.

The RNase H type-2 domain maps to 13–202 (DLVAGVDEVG…VRAAHEARAT (190 aa)). Positions 19, 20, and 111 each coordinate a divalent metal cation.

The protein belongs to the RNase HII family. Mn(2+) serves as cofactor. Mg(2+) is required as a cofactor.

The protein localises to the cytoplasm. The enzyme catalyses Endonucleolytic cleavage to 5'-phosphomonoester.. Endonuclease that specifically degrades the RNA of RNA-DNA hybrids. The protein is Ribonuclease HII of Pseudomonas syringae pv. syringae (strain B728a).